Consider the following 92-residue polypeptide: Small nuclear ribonucleoprotein E (92 aa).

Positions 18-92 (INLIFRYLQN…NITLLQSVSN (75 aa)) constitute a Sm domain.

It belongs to the snRNP Sm proteins family. As to quaternary structure, core component of the spliceosomal U1, U2, U4 and U5 small nuclear ribonucleoproteins (snRNPs), the building blocks of the spliceosome. Most spliceosomal snRNPs contain a common set of Sm proteins, SNRPB, SNRPD1, SNRPD2, SNRPD3, SNRPE, SNRPF and SNRPG that assemble in a heptameric protein ring on the Sm site of the small nuclear RNA to form the core snRNP. Component of the U1 snRNP. The U1 snRNP is composed of the U1 snRNA and the 7 core Sm proteins SNRPB, SNRPD1, SNRPD2, SNRPD3, SNRPE, SNRPF and SNRPG, and at least three U1 snRNP-specific proteins SNRNP70/U1-70K, SNRPA/U1-A and SNRPC/U1-C. Component of the U4/U6-U5 tri-snRNP complex composed of the U4, U6 and U5 snRNAs and at least PRPF3, PRPF4, PRPF6, PRPF8, PRPF31, SNRNP200, TXNL4A, SNRNP40, SNRPB, SNRPD1, SNRPD2, SNRPD3, SNRPE, SNRPF, SNRPG, DDX23, CD2BP2, PPIH, SNU13, EFTUD2, SART1 and USP39, plus LSM2, LSM3, LSM4, LSM5, LSM6, LSM7 and LSM8. Component of the U7 snRNP complex, or U7 Sm protein core complex, that is composed of the U7 snRNA and at least LSM10, LSM11, SNRPB, SNRPD3, SNRPE, SNRPF and SNRPG; the complex does not contain SNRPD1 and SNRPD2. Component of the minor spliceosome, which splices U12-type introns. Part of the SMN-Sm complex that contains SMN1, GEMIN2/SIP1, DDX20/GEMIN3, GEMIN4, GEMIN5, GEMIN6, GEMIN7, GEMIN8, STRAP/UNRIP and the Sm proteins SNRPB, SNRPD1, SNRPD2, SNRPD3, SNRPE, SNRPF and SNRPG; catalyzes core snRNPs assembly. Forms a 6S pICln-Sm complex composed of CLNS1A/pICln, SNRPD1, SNRPD2, SNRPE, SNRPF and SNRPG; ring-like structure where CLNS1A/pICln mimics additional Sm proteins and which is unable to assemble into the core snRNP. Interacts with SMN1; the interaction is direct. Interacts with GEMIN2 (via N-terminus); the interaction is direct. Interacts with SNRPF; the interaction is direct. Interacts with SNRPG; the interaction is direct.

It is found in the cytoplasm. The protein resides in the cytosol. It localises to the nucleus. Plays a role in pre-mRNA splicing as a core component of the spliceosomal U1, U2, U4 and U5 small nuclear ribonucleoproteins (snRNPs), the building blocks of the spliceosome. Component of both the pre-catalytic spliceosome B complex and activated spliceosome C complexes. As a component of the minor spliceosome, involved in the splicing of U12-type introns in pre-mRNAs. As part of the U7 snRNP it is involved in histone 3'-end processing. The sequence is that of Small nuclear ribonucleoprotein E (SNRPE) from Sus scrofa (Pig).